The primary structure comprises 445 residues: Cytochrome P450 monooxygenase penB (445 aa).

Heme is bound at residue cysteine 381.

Belongs to the cytochrome P450 family. It depends on heme as a cofactor.

It participates in secondary metabolite biosynthesis. It functions in the pathway alkaloid biosynthesis. Its pathway is mycotoxin biosynthesis. Functionally, cytochrome P450 monooxygenase; part of the gene cluster that mediates the biosynthesis of penigequinolones, potent insecticidal alkaloids that contain a highly modified 10-carbon prenyl group. The first stage is catalyzed by the nonribosomal peptide synthetase penN that condenses anthranilic acid and O-methyl-L-tyrosine to produce 4'-methoxycyclopeptin. 4'-methoxycyclopeptin is then converted to 4'-methoxydehydrocyclopeptin by the ketoglutarate-dependent dioxygenase penM through dehydrogenation to form a double bond between C-alpha and C-beta of the O-methyltyrosine side chain. PenM also converts its first product methoxydehydrocyclopeptin to 4'-methoxycyclopenin. The following conversion of 4'methoxycyclopenin into 4'-methoxyviridicatin is catalyzed by the cyclopenase penL. 4'-methoxyviridicatin is the precursor of quinolone natural products, and is further converted to quinolinone B. The prenyltransferase penI then catalyzes the canonical Friedel-Crafts alkylation of quinolinone B with dimethylallyl cation to yield dimethylallyl quinolone, which is subjected to FAD-dependent dehydrogenation by the FAD-linked oxidoreductase penH to yield conjugated aryl diene. The delta(3') double bond then serves as the site of the second alkylation with DMAPP catalyzed by the prenyltransferase penG to yield a carbenium ion intermediate, which can be attacked by H(2)O to yield a styrenyl quinolone containing a C3'-hydroxyprenyl chain, or undergo cyclization to yield yaequinolones J1 and J2. The conversion of the styrenyl quinolone into the tetrahydrofuran-containing yaequinolone C is performed by the FAD-dependent monooxygenase penE and involves epoxidation of the terminal C7'-C8' olefin, followed by epoxide ring opening initiated by the C3' hydroxyl group. The predicted cysteine hydrolase penJ acts as an epoxide hydrolase that enhances the rate of the 5-exo-tet cyclization step, increasing the yield of yaequinolone C. PenF catalyzes the cationic rearrangement of the epoxide formed by penE (before ring opening to produce yaequinolone C) into yaequinolone D. Finally, the short-chain dehydrogenase/reductase (SDR)-like reductase penD, catalyzes both the dehydration of yaequinolone D and the reduction of the resulting oxonium to yield penigequinolone. This Penicillium thymicola protein is Cytochrome P450 monooxygenase penB.